Consider the following 188-residue polypeptide: Photosystem I assembly protein Ycf4 (188 aa).

Transmembrane regions (helical) follow at residues Y26–S46 and L68–I88.

This sequence belongs to the Ycf4 family.

It is found in the cellular thylakoid membrane. Its function is as follows. Seems to be required for the assembly of the photosystem I complex. The protein is Photosystem I assembly protein Ycf4 of Synechococcus elongatus (strain ATCC 33912 / PCC 7942 / FACHB-805) (Anacystis nidulans R2).